A 288-amino-acid polypeptide reads, in one-letter code: Acetyl-coenzyme A carboxylase carboxyl transferase subunit beta (288 aa).

One can recognise a CoA carboxyltransferase N-terminal domain in the interval 34–288 (LFAKCPACKH…HLVSFHGGGQ (255 aa)). Cys38, Cys41, Cys56, and Cys59 together coordinate Zn(2+). Residues 38 to 59 (CPACKHMIYKKDLGLAKICPTC) form a C4-type zinc finger.

The protein belongs to the AccD/PCCB family. As to quaternary structure, acetyl-CoA carboxylase is a heterohexamer composed of biotin carboxyl carrier protein (AccB), biotin carboxylase (AccC) and two subunits each of ACCase subunit alpha (AccA) and ACCase subunit beta (AccD). Zn(2+) is required as a cofactor.

The protein localises to the cytoplasm. It catalyses the reaction N(6)-carboxybiotinyl-L-lysyl-[protein] + acetyl-CoA = N(6)-biotinyl-L-lysyl-[protein] + malonyl-CoA. Its pathway is lipid metabolism; malonyl-CoA biosynthesis; malonyl-CoA from acetyl-CoA: step 1/1. In terms of biological role, component of the acetyl coenzyme A carboxylase (ACC) complex. Biotin carboxylase (BC) catalyzes the carboxylation of biotin on its carrier protein (BCCP) and then the CO(2) group is transferred by the transcarboxylase to acetyl-CoA to form malonyl-CoA. This Streptococcus pyogenes serotype M49 (strain NZ131) protein is Acetyl-coenzyme A carboxylase carboxyl transferase subunit beta.